The sequence spans 644 residues: Chaperone protein DnaK (644 aa).

Thr-199 carries the post-translational modification Phosphothreonine; by autocatalysis. Residues Leu-602–Lys-644 are disordered. A compositionally biased stretch (low complexity) spans Ala-604–Ala-614. Positions Gly-631 to Lys-644 are enriched in acidic residues.

It belongs to the heat shock protein 70 family.

Acts as a chaperone. The chain is Chaperone protein DnaK from Teredinibacter turnerae (strain ATCC 39867 / T7901).